The primary structure comprises 341 residues: Anthranilate phosphoribosyltransferase (341 aa).

5-phospho-alpha-D-ribose 1-diphosphate is bound by residues Gly-84, 87–88, Thr-92, 94–97, 112–120, and Ser-124; these read GD, NIST, and KHGNRSVSS. Gly-84 is an anthranilate binding site. Residue Ser-96 coordinates Mg(2+). Asn-115 provides a ligand contact to anthranilate. Arg-170 lines the anthranilate pocket. Residues Asp-229 and Glu-230 each contribute to the Mg(2+) site.

This sequence belongs to the anthranilate phosphoribosyltransferase family. As to quaternary structure, homodimer. Requires Mg(2+) as cofactor.

The catalysed reaction is N-(5-phospho-beta-D-ribosyl)anthranilate + diphosphate = 5-phospho-alpha-D-ribose 1-diphosphate + anthranilate. Its pathway is amino-acid biosynthesis; L-tryptophan biosynthesis; L-tryptophan from chorismate: step 2/5. Catalyzes the transfer of the phosphoribosyl group of 5-phosphorylribose-1-pyrophosphate (PRPP) to anthranilate to yield N-(5'-phosphoribosyl)-anthranilate (PRA). This chain is Anthranilate phosphoribosyltransferase, found in Polynucleobacter asymbioticus (strain DSM 18221 / CIP 109841 / QLW-P1DMWA-1) (Polynucleobacter necessarius subsp. asymbioticus).